The sequence spans 132 residues: Fatty acid-binding protein, intestinal (132 aa).

Ala2 carries the post-translational modification N-acetylalanine. Residues Trp83 and Arg107 each coordinate hexadecanoate. Tetradecanoate contacts are provided by Trp83 and Arg107.

It belongs to the calycin superfamily. Fatty-acid binding protein (FABP) family.

The protein resides in the cytoplasm. Its function is as follows. FABPs are thought to play a role in the intracellular transport of long-chain fatty acids and their acyl-CoA esters. The sequence is that of Fatty acid-binding protein, intestinal (fabp2) from Xenopus laevis (African clawed frog).